We begin with the raw amino-acid sequence, 452 residues long: Tripartite motif-containing protein 49 (452 aa).

The segment at 15–56 adopts an RING-type zinc-finger fold; the sequence is CPLCMNYFIDPVTIDCGHSFCRPCFYLNWQDIPFLVQCSECT. A B box-type zinc finger spans residues 88-129; sequence SEEQMCGTHRETKKIFCEVDRSLLCLLCSSSQEHRYHRHRPI. C93, H96, C115, and H121 together coordinate Zn(2+). Residues 269 to 452 form the B30.2/SPRY domain; it reads ELSAGPITGL…LRPIFCCIHF (184 aa).

It belongs to the TRIM/RBCC family. As to expression, preferentially expressed in testis.

In Homo sapiens (Human), this protein is Tripartite motif-containing protein 49 (TRIM49).